We begin with the raw amino-acid sequence, 623 residues long: Chaperone protein HtpG (623 aa).

The interval 1–336 is a; substrate-binding; that stretch reads MSMKGQETRG…SNDLPLNVSR (336 aa). The segment at 337–551 is b; that stretch reads EILQDSRVTQ…ADEMSTQMAK (215 aa). Positions 552 to 623 are c; that stretch reads LFAAAGQEAP…IRRMNKLLSA (72 aa).

The protein belongs to the heat shock protein 90 family. As to quaternary structure, homodimer.

It is found in the cytoplasm. Its function is as follows. Molecular chaperone. Has ATPase activity. In Serratia proteamaculans (strain 568), this protein is Chaperone protein HtpG.